The primary structure comprises 319 residues: METRNIFSWIKEQITRSISVSLMIYIITRTAVSNAYPIFAQQGYENPREATGRIVCANCHLANKPVDIEVPQAVLPDTVFEAVVRIPYDKQLKQVLANGKKGGLNVGAVLILPEGFELAPPDRISPEIKEKIGNLSFQSYRPNKKNILVIGPIPGQKYSEITFPILSPDPATKKDVHFLKYPIYVGGNRGRGQIYPDGSKSNNTVYNATGAGIVSKIIRKEKGGYEITITDTDGRQVVDIIPPGPELLVSEGEYIKLDQPLTSNPNVGGFGQGDAEIVLQDPLRVQGLLFFLASVILAQIFLVLKKKQFEKVQLAEMNF.

Residues 1-35 form the signal peptide; that stretch reads METRNIFSWIKEQITRSISVSLMIYIITRTAVSNA. Heme is bound by residues tyrosine 36, cysteine 56, cysteine 59, and histidine 60. The helical transmembrane segment at 285–305 threads the bilayer; sequence VQGLLFFLASVILAQIFLVLK.

Belongs to the cytochrome f family. The 4 large subunits of the cytochrome b6-f complex are cytochrome b6, subunit IV (17 kDa polypeptide, petD), cytochrome f and the Rieske protein, while the 4 small subunits are PetG, PetL, PetM and PetN. The complex functions as a dimer. Heme is required as a cofactor.

Its subcellular location is the plastid. The protein localises to the chloroplast thylakoid membrane. Functionally, component of the cytochrome b6-f complex, which mediates electron transfer between photosystem II (PSII) and photosystem I (PSI), cyclic electron flow around PSI, and state transitions. The chain is Cytochrome f from Coffea arabica (Arabian coffee).